A 92-amino-acid chain; its full sequence is RIIa domain-containing protein 1 (92 aa).

The RIIa domain maps to 43–77; the sequence is KEVELLISGFFREMFLKRPDNIPEFAADYFTDPRL.

This Bos taurus (Bovine) protein is RIIa domain-containing protein 1 (RIIAD1).